A 366-amino-acid polypeptide reads, in one-letter code: Ribosomal RNA large subunit methyltransferase M (366 aa).

S-adenosyl-L-methionine is bound by residues Ser188, 221 to 224 (CPGG), Asp240, Asp260, and Asp277. Lys306 functions as the Proton acceptor in the catalytic mechanism.

The protein belongs to the class I-like SAM-binding methyltransferase superfamily. RNA methyltransferase RlmE family. RlmM subfamily. As to quaternary structure, monomer.

Its subcellular location is the cytoplasm. It carries out the reaction cytidine(2498) in 23S rRNA + S-adenosyl-L-methionine = 2'-O-methylcytidine(2498) in 23S rRNA + S-adenosyl-L-homocysteine + H(+). Functionally, catalyzes the 2'-O-methylation at nucleotide C2498 in 23S rRNA. The chain is Ribosomal RNA large subunit methyltransferase M from Salmonella newport (strain SL254).